The sequence spans 113 residues: Large ribosomal subunit protein P1 (113 aa).

The disordered stretch occupies residues 84–113 (APAAAAKKETKKEEVKKEESDDDMGMGLFD). Residues 89 to 102 (AKKETKKEEVKKEE) are compositionally biased toward basic and acidic residues.

This sequence belongs to the eukaryotic ribosomal protein P1/P2 family. In terms of assembly, P1 and P2 exist as dimers at the large ribosomal subunit.

Plays an important role in the elongation step of protein synthesis. This chain is Large ribosomal subunit protein P1 (rplp1), found in Dictyostelium discoideum (Social amoeba).